We begin with the raw amino-acid sequence, 185 residues long: Elongation factor P (185 aa).

It belongs to the elongation factor P family.

The protein localises to the cytoplasm. It functions in the pathway protein biosynthesis; polypeptide chain elongation. In terms of biological role, involved in peptide bond synthesis. Stimulates efficient translation and peptide-bond synthesis on native or reconstituted 70S ribosomes in vitro. Probably functions indirectly by altering the affinity of the ribosome for aminoacyl-tRNA, thus increasing their reactivity as acceptors for peptidyl transferase. In Burkholderia ambifaria (strain MC40-6), this protein is Elongation factor P.